A 201-amino-acid chain; its full sequence is Large ribosomal subunit protein uL4 (201 aa).

The segment at 44–71 (RAQKTRAEVTGSGKKPWRQKGTGRARSG) is disordered.

The protein belongs to the universal ribosomal protein uL4 family. As to quaternary structure, part of the 50S ribosomal subunit.

Functionally, one of the primary rRNA binding proteins, this protein initially binds near the 5'-end of the 23S rRNA. It is important during the early stages of 50S assembly. It makes multiple contacts with different domains of the 23S rRNA in the assembled 50S subunit and ribosome. In terms of biological role, forms part of the polypeptide exit tunnel. The polypeptide is Large ribosomal subunit protein uL4 (Edwardsiella ictaluri (strain 93-146)).